A 375-amino-acid chain; its full sequence is Erythronate-4-phosphate dehydrogenase (375 aa).

The substrate site is built by Ser-45 and Thr-66. NAD(+)-binding positions include Asp-146, Thr-175, Ala-206 to Arg-208, and Asp-232. Arg-208 is an active-site residue. Glu-237 is an active-site residue. Catalysis depends on His-254, which acts as the Proton donor. Gly-257 contacts NAD(+). Substrate is bound at residue Tyr-258.

This sequence belongs to the D-isomer specific 2-hydroxyacid dehydrogenase family. PdxB subfamily. In terms of assembly, homodimer.

It is found in the cytoplasm. It catalyses the reaction 4-phospho-D-erythronate + NAD(+) = (R)-3-hydroxy-2-oxo-4-phosphooxybutanoate + NADH + H(+). It participates in cofactor biosynthesis; pyridoxine 5'-phosphate biosynthesis; pyridoxine 5'-phosphate from D-erythrose 4-phosphate: step 2/5. Catalyzes the oxidation of erythronate-4-phosphate to 3-hydroxy-2-oxo-4-phosphonooxybutanoate. In Proteus mirabilis (strain HI4320), this protein is Erythronate-4-phosphate dehydrogenase.